We begin with the raw amino-acid sequence, 189 residues long: Flavin prenyltransferase UbiX (189 aa).

FMN is bound by residues 10–12, Ser-37, 88–91, and Arg-123; these read GAS and SIKT. Tyr-153 and Arg-169 together coordinate dimethylallyl phosphate.

Belongs to the UbiX/PAD1 family.

It carries out the reaction dimethylallyl phosphate + FMNH2 = prenylated FMNH2 + phosphate. The protein operates within cofactor biosynthesis; ubiquinone biosynthesis. In terms of biological role, flavin prenyltransferase that catalyzes the synthesis of the prenylated FMN cofactor (prenyl-FMN) for 4-hydroxy-3-polyprenylbenzoic acid decarboxylase UbiD. The prenyltransferase is metal-independent and links a dimethylallyl moiety from dimethylallyl monophosphate (DMAP) to the flavin N5 and C6 atoms of FMN. In Escherichia coli O157:H7, this protein is Flavin prenyltransferase UbiX.